A 94-amino-acid polypeptide reads, in one-letter code: Alpha-conotoxin Cp20.3 (94 aa).

An N-terminal signal peptide occupies residues 1–24 (MPKLAVVLLVLLILPLSYFDAAGG). A propeptide spanning residues 25–45 (QAVQGDRRGNGLARYLQRGDR) is cleaved from the precursor. The residue at position 46 (Glu-46) is a 4-carboxyglutamate; partial. Position 49 is a 4-carboxyglutamate (Glu-49). Position 55 is a 4-hydroxyproline (Pro-55). 4 disulfides stabilise this stretch: Cys-63-Cys-72, Cys-68-Cys-80, Cys-73-Cys-90, and Cys-78-Cys-92.

It belongs to the conotoxin D superfamily. Hetero-, homo- or pseudo-homodimer (identical sequence, different post-translational modifications). In terms of tissue distribution, expressed by the venom duct.

It localises to the secreted. Functionally, alpha-D-conopeptides act on postsynaptic membranes, they bind to the nicotinic acetylcholine receptors (nAChR) and thus inhibit them. Through its two C-terminal domains, this homodimeric protein would bind to two nAChR allosteric sites, located outside the nAChR C-loop of the principal binding face and at the adjacent binding interface in a clockwise direction. This toxin specifically blocks mammalian neuronal nAChR of the alpha-7/CHRNA7 (IC(50)=0.25 nM), alpha-3-beta-2/CHRNA3-CHRNB2 (IC(50)=2.8 nM), and alpha-4-beta-2/CHRNA4-CHRNB2 (IC(50)=28.6 nM) subtypes. Has no effect on alpha-3-beta-4/CHRNA3-CHRNB4, alpha-4-beta-4/CHRNA4-CHRNB4 and alpha-1-beta-1-epsilon-delta/CHRNA1-CHRNB1-CHRNE-CHRND subtypes of nAChRs. The chain is Alpha-conotoxin Cp20.3 from Conus capitaneus (Captain cone).